Consider the following 61-residue polypeptide: Photosystem II reaction center protein K (61 aa).

The propeptide occupies 1 to 24 (MLNIFSLMYICLNSALYSSSFLFA). Residues 40 to 60 (MPVIPVLFFLLAFVWQAAVSF) form a helical membrane-spanning segment.

This sequence belongs to the PsbK family. In terms of assembly, PSII is composed of 1 copy each of membrane proteins PsbA, PsbB, PsbC, PsbD, PsbE, PsbF, PsbH, PsbI, PsbJ, PsbK, PsbL, PsbM, PsbT, PsbX, PsbY, PsbZ, Psb30/Ycf12, at least 3 peripheral proteins of the oxygen-evolving complex and a large number of cofactors. It forms dimeric complexes.

The protein resides in the plastid. It localises to the chloroplast thylakoid membrane. Its function is as follows. One of the components of the core complex of photosystem II (PSII). PSII is a light-driven water:plastoquinone oxidoreductase that uses light energy to abstract electrons from H(2)O, generating O(2) and a proton gradient subsequently used for ATP formation. It consists of a core antenna complex that captures photons, and an electron transfer chain that converts photonic excitation into a charge separation. The protein is Photosystem II reaction center protein K of Citrus sinensis (Sweet orange).